Here is a 51-residue protein sequence, read N- to C-terminus: MGMSFSHLLIILLIIFVLFGAGKLPQVMSDLAKGLKAFKDGMKEDDSTKKD.

Residues 1–21 traverse the membrane as a helical segment; the sequence is MGMSFSHLLIILLIIFVLFGA.

It belongs to the TatA/E family. In terms of assembly, the Tat system comprises two distinct complexes: a TatABC complex, containing multiple copies of TatA, TatB and TatC subunits, and a separate TatA complex, containing only TatA subunits. Substrates initially bind to the TatABC complex, which probably triggers association of the separate TatA complex to form the active translocon.

Its subcellular location is the cell inner membrane. Part of the twin-arginine translocation (Tat) system that transports large folded proteins containing a characteristic twin-arginine motif in their signal peptide across membranes. TatA could form the protein-conducting channel of the Tat system. The polypeptide is Sec-independent protein translocase protein TatA (Rickettsia bellii (strain RML369-C)).